The following is a 149-amino-acid chain: Macrodomain Ter protein (149 aa).

Belongs to the MatP family. As to quaternary structure, homodimer.

Its subcellular location is the cytoplasm. Functionally, required for spatial organization of the terminus region of the chromosome (Ter macrodomain) during the cell cycle. Prevents early segregation of duplicated Ter macrodomains during cell division. Binds specifically to matS, which is a 13 bp signature motif repeated within the Ter macrodomain. This Vibrio vulnificus (strain CMCP6) protein is Macrodomain Ter protein.